A 43-amino-acid chain; its full sequence is Protein PsbN (43 aa).

The chain crosses the membrane as a helical span at residues 5-27; sequence TLVTISISCLLVSFTGYALYTAF.

It belongs to the PsbN family.

The protein resides in the plastid. It localises to the chloroplast thylakoid membrane. Its function is as follows. May play a role in photosystem I and II biogenesis. The polypeptide is Protein PsbN (Pinus koraiensis (Korean pine)).